A 706-amino-acid chain; its full sequence is Complement C1r-B subcomponent (706 aa).

A signal peptide spans 1-16 (MWLFALLVTLFYGVEG). The CUB 1 domain maps to 17-140 (SIYLPQKLYG…KGFLAYYQAV (124 aa)). The Ca(2+) site is built by Glu65, Asp73, and Asp118. Residues Cys70 and Cys88 are joined by a disulfide bond. A glycan (N-linked (GlcNAc...) asparagine) is linked at Asn124. Residues Asp141, Leu142, and Glu144 each contribute to the Ca(2+) site. The region spanning 141–189 (DLDECASQPNSVEEGLQPRCQHLCHNYVGGYFCSCHPGYELQKDGQSCQ) is the EGF-like; calcium-binding domain. 4 disulfide bridges follow: Cys145/Cys164, Cys160/Cys173, Cys175/Cys188, and Cys192/Cys219. Residues Asn166, Tyr167, and Gly170 each contribute to the Ca(2+) site. Position 166 is a (3R)-3-hydroxyasparagine (Asn166). In terms of domain architecture, CUB 2 spans 192–304 (CSSELYTEPS…RGWKLHYTTE (113 aa)). Ser205 carries the post-translational modification Phosphoserine; by CK2. N-linked (GlcNAc...) asparagine glycosylation is present at Asn220. Ca(2+) contacts are provided by Asp242, Asp252, Asp289, and Asp293. Residues Cys249 and Cys267 are joined by a disulfide bond. 2 consecutive Sushi domains span residues 306–372 (IKCP…RCKI) and 373–448 (KNCG…RCLP). 5 cysteine pairs are disulfide-bonded: Cys308–Cys357, Cys337–Cys370, Cys375–Cys428, Cys405–Cys446, and Cys450–Cys578. One can recognise a Peptidase S1 domain in the interval 463-703 (IIGGQPARPG…YVDWIKKEMG (241 aa)). Active-site charge relay system residues include His501 and Asp558. The N-linked (GlcNAc...) asparagine glycan is linked to Asn582. Intrachain disulfides connect Cys621–Cys640 and Cys651–Cys681. The active-site Charge relay system is Ser655.

It belongs to the peptidase S1 family. In terms of assembly, core component of the complement C1 complex, a calcium-dependent complex composed of 1 molecule of the C1Q subcomplex, 2 molecules of C1R and 2 molecules of C1S. The C1Q subcomplex is composed 18 subunits: 3 chains of C1QA, C1QB, and C1QC trimerize to form 6 collagen-like triple helices connected to six globular ligand-recognition modules. Within the C1 complex, C1R is a dimer of identical chains, each of which is activated by cleavage into two chains, heavy and light, connected by disulfide bonds. Post-translationally, cleaved and activated by autocatalytic processing to generate Complement C1r subcomponent heavy and light chains that are connected by disulfide bonds. The iron and 2-oxoglutarate dependent 3-hydroxylation of aspartate and asparagine is (R) stereospecific within EGF domains.

The protein resides in the secreted. It localises to the cell surface. The catalysed reaction is Selective cleavage of Lys(or Arg)-|-Ile bond in complement subcomponent C1s to form the active form of C1s (EC 3.4.21.42).. Activated by the C1Q subcomplex of the C1 complex following C1Q binding to immunoglobulins (IgG or IgM) complexed with antigens to form antigen-antibody complexes on the surface of pathogens. Immunoglobulin-binding promotes autoactivation of C1R, which results in the cleavage of the Arg-Ile bond in the catalytic domain. Functionally, serine protease component of the complement C1 complex, a multiprotein complex that initiates the classical pathway of the complement system, a cascade of proteins that leads to phagocytosis and breakdown of pathogens and signaling that strengthens the adaptive immune system. C1R catalyzes the first enzymatic step in the classical complement pathway: it is activated by the C1Q subcomplex of the C1 complex, which associates with IgG or IgM immunoglobulins complexed with antigens to form antigen-antibody complexes on the surface of pathogens. Immunoglobulin-binding promotes the autocatalytic cleavage and activation of C1R. Activated C1R then cleaves and activates C1S, the second protease of the classical complement pathway. It is unclear if C1R activates C1S within single, strained C1 complexes or between neighboring C1 complexes on surfaces. In Mus musculus (Mouse), this protein is Complement C1r-B subcomponent (C1rb).